We begin with the raw amino-acid sequence, 501 residues long: Protein YLS7 (501 aa).

Residues 25–45 (IAFAIGGLTSFVIFASLLLFT) traverse the membrane as a helical; Signal-anchor for type II membrane protein segment. Residues 69-131 (HSIHDPDRNP…NVSIDEEATQ (63 aa)) are disordered. Over residues 78-89 (PSPVSSSESPPV) the composition is skewed to low complexity. The span at 94 to 113 (SDDKVLPKGSHDSNDVRLGE) shows a compositional bias: basic and acidic residues. Polar residues predominate over residues 114–124 (ETNSGKSSNVS). A GDS motif motif is present at residues 211-213 (GDS). The tract at residues 438-467 (RHDGHPGPYRSPDPKKITKRGPDGQPPPQD) is disordered. Positions 449 to 459 (PDPKKITKRGP) are enriched in basic and acidic residues. Residues 467–481 (DCLHWCMPGPVDTWN) carry the DCXHWCLPGXXDXWN motif motif.

The protein belongs to the PC-esterase family. TBL subfamily. As to expression, expressed in roots, cauline leaves and flowers.

Its subcellular location is the membrane. Its function is as follows. May act as a bridging protein that binds pectin and other cell wall polysaccharides. Probably involved in maintaining esterification of pectins. May be involved in the specific O-acetylation of cell wall polymers. This is Protein YLS7 (YLS7) from Arabidopsis thaliana (Mouse-ear cress).